Consider the following 216-residue polypeptide: Ribonuclease T (216 aa).

The region spanning 28–202 (VVVDVETGGF…YDTEQTARLF (175 aa)) is the Exonuclease domain. Residues D31, E33, H189, and D194 each contribute to the Mg(2+) site. H189 serves as the catalytic Proton donor/acceptor.

Belongs to the RNase T family. Homodimer. Mg(2+) serves as cofactor.

Trims short 3' overhangs of a variety of RNA species, leaving a one or two nucleotide 3' overhang. Responsible for the end-turnover of tRNA: specifically removes the terminal AMP residue from uncharged tRNA (tRNA-C-C-A). Also appears to be involved in tRNA biosynthesis. The polypeptide is Ribonuclease T (Xanthomonas campestris pv. campestris (strain 8004)).